The primary structure comprises 67 residues: DNA-directed RNA polymerase subunit omega (67 aa).

This sequence belongs to the RNA polymerase subunit omega family. In terms of assembly, RNAP is composed of a core of 2 alpha, a beta and a beta' subunit. The core is associated with a delta subunit, and at least one of epsilon or omega. When a sigma factor is associated with the core the holoenzyme is formed, which can initiate transcription.

It catalyses the reaction RNA(n) + a ribonucleoside 5'-triphosphate = RNA(n+1) + diphosphate. In terms of biological role, promotes RNA polymerase assembly. Latches the N- and C-terminal regions of the beta' subunit thereby facilitating its interaction with the beta and alpha subunits. In vitro reconstitution experiments this subunit is dispensible. The chain is DNA-directed RNA polymerase subunit omega (rpoZ) from Bacillus subtilis (strain 168).